The primary structure comprises 680 residues: MSTNPLLDQSMLPYQAPRFDRIKDCHYRPAFDEGVRQKRVEIEAIVNHPAAPDFTNTLLALEQSGALLSRVTSVFFAMTAAHTNDELQRLDEAFSAELAALSNDIYLNSALFARVDAVWQQRHSLGLDDESLRLVDVIHQRFVLAGAQLAEEDKARLKVLNTESATLMSQFNQRLLAASKAGGLAVDDAHCLAGLSPEEMTVAAEAAREKGLEERWFIPLLNTTQQPALATLRDRQTRENLFAASWTRAEKGDAHDTRAIVQRLVEIRRCQAKLLGFPNYAAWKMADQMAKTPQAALSFMRGIVPPARQRVLNEQAEIQNVIDGEQGGYTVQAWDWMFYAEQVRREKYALDEAQLKPYFALNTVLQEGVFWTANQLFGITFVERFDIPVYHPDVRVWEIFDSDGVGMALFYGDFFARDSKSGGAWMGNFVEQSTLNETRPVIYNVCNYQKPVDGQPALLLWDDVITLFHEFGHTLHGLFAVQRYATLSGTNTPRDFVEFPSQINEHWASHPRVFERYARHVDSGEKMPADLQERMRKASLFNKGYDMTELLGAALLDMRWHMLEESVAEQSVAEFEQQALAAEHLDLPAVPPRYRSSYFAHIFGGGYAAGYYAYLWTQMLADDGYQWFVEQGGLTRENGQRFRDAILARGNSTDLETLYSAWRGHEPHIDPMLQYRGLDR.

Residue H469 coordinates Zn(2+). Residue E470 is part of the active site. 2 residues coordinate Zn(2+): H473 and H476.

The protein belongs to the peptidase M3 family. Requires Zn(2+) as cofactor.

The protein localises to the cytoplasm. It catalyses the reaction Hydrolysis of unblocked, C-terminal dipeptides from oligopeptides, with broad specificity. Does not hydrolyze bonds in which P1' is Pro, or both P1 and P1' are Gly.. In terms of biological role, removes dipeptides from the C-termini of N-blocked tripeptides, tetrapeptides and larger peptides. The sequence is that of Dipeptidyl carboxypeptidase (dcp) from Salmonella typhimurium (strain LT2 / SGSC1412 / ATCC 700720).